A 71-amino-acid chain; its full sequence is Large ribosomal subunit protein bL31 (71 aa).

Zn(2+) is bound by residues C16, C18, C37, and C40.

It belongs to the bacterial ribosomal protein bL31 family. Type A subfamily. In terms of assembly, part of the 50S ribosomal subunit. It depends on Zn(2+) as a cofactor.

Binds the 23S rRNA. This chain is Large ribosomal subunit protein bL31, found in Actinobacillus succinogenes (strain ATCC 55618 / DSM 22257 / CCUG 43843 / 130Z).